The sequence spans 189 residues: dCTP deaminase (189 aa).

Residues 112–117 (KSTYAR), 136–138 (TLE), Gln-157, Tyr-171, and Gln-181 contribute to the dCTP site. Catalysis depends on Glu-138, which acts as the Proton donor/acceptor.

Belongs to the dCTP deaminase family. Homotrimer.

It carries out the reaction dCTP + H2O + H(+) = dUTP + NH4(+). The protein operates within pyrimidine metabolism; dUMP biosynthesis; dUMP from dCTP (dUTP route): step 1/2. Its function is as follows. Catalyzes the deamination of dCTP to dUTP. The chain is dCTP deaminase from Paraburkholderia xenovorans (strain LB400).